A 580-amino-acid chain; its full sequence is Glypican-3 (580 aa).

The N-terminal stretch at 1–24 (MAGTVRTACLVVAMLLSLDFPGQA) is a signal peptide. Glutamine 25 is modified (pyrrolidone carboxylic acid). 7 disulfides stabilise this stretch: cysteine 35/cysteine 72, cysteine 65/cysteine 262, cysteine 73/cysteine 265, cysteine 197/cysteine 349, cysteine 252/cysteine 285, cysteine 274/cysteine 422, and cysteine 278/cysteine 410. N-linked (GlcNAc...) asparagine glycosylation is found at asparagine 124 and asparagine 241. Serine 352 carries the phosphoserine modification. N-linked (GlcNAc...) asparagine glycosylation is present at asparagine 418. O-linked (Xyl...) (glycosaminoglycan) serine glycosylation is found at serine 495 and serine 509. Asparagine 554 carries the GPI-anchor amidated asparagine lipid modification. A propeptide spans 555-580 (LGNVHSPLKLLTSMAISVVCFFFLVH) (removed in mature form).

This sequence belongs to the glypican family. Heterodimer; disulfide-linked. Cleavage by a furin-like convertase results in production of alpha and beta chains which form a disulfide-linked heterodimer. Interacts with DPP4. Interacts with FGF2. Interacts with WNT5A. Also interacts with WNT3A and WNT7B. Interacts with hedgehog protein SHH; the heparan sulfate chains are not required for the interaction. Also interacts with hedgehog protein IHH. Interacts with CD81. Interacts with Wnt receptors FZD4, FZD7 and FZD8; the heparan sulfate chains are required for the interaction. In terms of processing, O-glycosylated; contains heparan sulfate and/or chondroitin sulfate. Post-translationally, cleaved intracellularly by a furin-like convertase to generate 2 subunits, alpha and beta, which remain associated through disulfide bonds and are associated with the cell surface via the GPI-anchor. This processing is essential for its role in inhibition of hedgehog signaling. A second proteolytic event may result in cleavage of the protein on the cell surface, separating it from the GPI-anchor and leading to its shedding from the cell surface.

Its subcellular location is the cell membrane. Its function is as follows. Cell surface proteoglycan. Negatively regulates the hedgehog signaling pathway when attached via the GPI-anchor to the cell surface by competing with the hedgehog receptor PTC1 for binding to hedgehog proteins. Binding to the hedgehog protein SHH triggers internalization of the complex by endocytosis and its subsequent lysosomal degradation. Positively regulates the canonical Wnt signaling pathway by binding to the Wnt receptor Frizzled and stimulating the binding of the Frizzled receptor to Wnt ligands. Positively regulates the non-canonical Wnt signaling pathway. Binds to CD81 which decreases the availability of free CD81 for binding to the transcriptional repressor HHEX, resulting in nuclear translocation of HHEX and transcriptional repression. Inhibits the dipeptidyl peptidase activity of DPP4. Plays a role in limb patterning and skeletal development by controlling the cellular response to BMP4. Modulates the effects of growth factors BMP2, BMP7 and FGF7 on renal branching morphogenesis. Required for coronary vascular development. Plays a role in regulating cell movements during gastrulation. The protein is Glypican-3 (GPC3) of Pan troglodytes (Chimpanzee).